Consider the following 527-residue polypeptide: Bifunctional purine biosynthesis protein PurH (527 aa).

Residues 1-149 (MASDFLPVRR…KNFARVAVAT (149 aa)) form the MGS-like domain.

Belongs to the PurH family.

It carries out the reaction (6R)-10-formyltetrahydrofolate + 5-amino-1-(5-phospho-beta-D-ribosyl)imidazole-4-carboxamide = 5-formamido-1-(5-phospho-D-ribosyl)imidazole-4-carboxamide + (6S)-5,6,7,8-tetrahydrofolate. It catalyses the reaction IMP + H2O = 5-formamido-1-(5-phospho-D-ribosyl)imidazole-4-carboxamide. It participates in purine metabolism; IMP biosynthesis via de novo pathway; 5-formamido-1-(5-phospho-D-ribosyl)imidazole-4-carboxamide from 5-amino-1-(5-phospho-D-ribosyl)imidazole-4-carboxamide (10-formyl THF route): step 1/1. Its pathway is purine metabolism; IMP biosynthesis via de novo pathway; IMP from 5-formamido-1-(5-phospho-D-ribosyl)imidazole-4-carboxamide: step 1/1. The chain is Bifunctional purine biosynthesis protein PurH from Xanthomonas euvesicatoria pv. vesicatoria (strain 85-10) (Xanthomonas campestris pv. vesicatoria).